The sequence spans 462 residues: MMLLYYILSFILLPVYFIIIFIRLLIGKEDIRRIQERFAIGKQRQNSLLDLQMSVNQEGFKVDTEHKATSYVYIHRNASLMYKLSLERSYAQSLVWIHAASVGEVMTSLTLIHNICKLAPNVRFLITSWTNTSAKILSTKLPKIATHQFLPIDNVIFTRKFLSNWKPDLGIFIESELWPCIINEGAKHCKLLLVNARISNKSFKTWLKRKKFFQLIIKNFSKIIVQSECDLQKFNALGISDAMNLGNIKFANEKLLVNQEKLSKLSLHLDNRRVVVFASTHPEDEEVILPIINNLKEQFVDCYIILIPRHPERVKSILNNCKCHNLLATAKSQNDLPVLSDDIYIVDRFGEMGLFFSVATISFIGGSFKQGGHNILEAAYFSNCIIFGPDMSKNTDIAKGILQNNAAIQIKNGEDLLNTLKSLLNANNALKLKAYRENALKFVEHNQKILDEYLHVIKPFLP.

Residues 2-22 form a helical; Signal-anchor membrane-spanning segment; it reads MLLYYILSFILLPVYFIIIFI. Positions 47–90 constitute an RPE1 insert domain; the sequence is SLLDLQMSVNQEGFKVDTEHKATSYVYIHRNASLMYKLSLERSY. The active-site Proton acceptor is the E104. CMP is bound by residues 308–309, 349–351, and 374–377; these read PR, FGE, and NILE.

The protein belongs to the glycosyltransferase group 1 family.

Its subcellular location is the cell inner membrane. It catalyses the reaction lipid IVA (E. coli) + CMP-3-deoxy-beta-D-manno-octulosonate = alpha-Kdo-(2-&gt;6)-lipid IVA (E. coli) + CMP + H(+). Its pathway is bacterial outer membrane biogenesis; LPS core biosynthesis. Functionally, involved in lipopolysaccharide (LPS) biosynthesis. Catalyzes the transfer of 3-deoxy-D-manno-octulosonate (Kdo) residue(s) from CMP-Kdo to lipid IV(A), the tetraacyldisaccharide-1,4'-bisphosphate precursor of lipid A. This Rickettsia typhi (strain ATCC VR-144 / Wilmington) protein is 3-deoxy-D-manno-octulosonic acid transferase (waaA).